The primary structure comprises 1123 residues: Polyprotein of EF-Ts, chloroplastic (1123 aa).

A chloroplast-targeting transit peptide spans 1–73 (MTPVVHCSVG…SSARRPRTLS (73 aa)). The tract at residues 68–141 (RPRTLSAATV…MPPLNDEDLV (74 aa)) is disordered. A compositionally biased stretch (acidic residues) spans 94 to 103 (TSEESSEDTA). Low complexity predominate over residues 106–119 (TAEASEQAEASTSS). Positions 143–212 (GASFTGKVRS…ETGRISLTMR (70 aa)) constitute an S1 motif 1 domain. The interval 213 to 258 (TGGDYVKPKTETPKAASGGRNTTATTSRGSPRQTRERDEAKSMGET) is disordered. Polar residues predominate over residues 231 to 244 (GRNTTATTSRGSPR). The span at 245–254 (QTRERDEAKS) shows a compositional bias: basic and acidic residues. The S1 motif 2 domain maps to 263 to 331 (GQFLDGVVKN…VRGQVTLTMK (69 aa)). 2 disordered regions span residues 443–670 (KTES…SEKT) and 894–923 (VAAQTAAKAPPAAPPKDDKPEETAETEEKK). Over residues 486–501 (EGSVTTEPTEAASTEF) the composition is skewed to polar residues. Positions 551–587 (SVASTESVTAVVEESAPVSSVAIEVPAPEASEASAQE) are enriched in low complexity. Residues 630–639 (KPDEPEESLI) show a composition bias toward acidic residues. 2 stretches are compositionally biased toward low complexity: residues 657-670 (AAVPEEVAASSEKT) and 894-903 (VAAQTAAKAP). Residues 908-923 (PKDDKPEETAETEEKK) show a composition bias toward basic and acidic residues.

This sequence belongs to the EF-Ts family. As to quaternary structure, component of the chloroplast ribosome 30S and 70S subunits, as well as polysomes. In terms of assembly, component of the chloroplast ribosome 70S subunit, and at low levels, present in polysomes. Associates transiently with chloroplast polysomes.

It localises to the plastid. The protein localises to the chloroplast. Functionally, associates with the EF-Tu.GDP complex and induces the exchange of GDP to GTP. It remains bound to the aminoacyl-tRNA.EF-Tu.GTP complex up to the GTP hydrolysis stage on the ribosome. In terms of biological role, binds to psbD and psbA 5'-untranslated regions (UTRs) in vitro. This chain is Polyprotein of EF-Ts, chloroplastic, found in Oryza sativa subsp. indica (Rice).